Here is a 315-residue protein sequence, read N- to C-terminus: BTB/POZ domain-containing adapter for CUL3-mediated RhoA degradation protein 3 (315 aa).

M1 bears the N-acetylmethionine mark. S23 carries the phosphoserine modification. The region spanning 32 to 100 (KYVKLNVGGA…LRDGGVPLPE (69 aa)) is the BTB domain. The short motif at 239 to 245 (QTKVEFP) is the PCNA-binding element. The interval 269–294 (NALLEATGGAAGRSHHLDEDEERERE) is disordered.

It belongs to the BACURD family. As to quaternary structure, homotetramer; forms a two-fold symmetric tetramer in solution. Interacts with CUL3; interaction is direct and forms a 5:5 heterodecamer. Component of the BCR(BACURD3) E3 ubiquitin ligase complex, at least composed of CUL3, KCTD10/BACURD3 and RBX1. Interacts with DNA polymerase delta subunit 2/POLD2. Interacts with PCNA. Associated with the tectonic-like complex (also named B9 complex); however as Kctd10 has not been identified in all tectonic-like complexes purifications it is unclear whether it is really part of the complex.

It is found in the nucleus. It functions in the pathway protein modification; protein ubiquitination. Substrate-specific adapter of a BCR (BTB-CUL3-RBX1) E3 ubiquitin-protein ligase complex. The BCR(BACURD3) E3 ubiquitin ligase complex mediates the ubiquitination of target proteins, leading to their degradation by the proteasome. This Mus musculus (Mouse) protein is BTB/POZ domain-containing adapter for CUL3-mediated RhoA degradation protein 3 (Kctd10).